A 211-amino-acid polypeptide reads, in one-letter code: Proline-rich 33 kDa extensin-related protein (211 aa).

The signal sequence occupies residues alanine 1–alanine 14. Composition is skewed to pro residues over residues proline 25–lysine 59 and histidine 82–lysine 93. The segment at proline 25–asparagine 211 is disordered. Basic residues-rich tracts occupy residues proline 101–proline 111 and proline 127–valine 139. Composition is skewed to basic and acidic residues over residues proline 142–proline 159 and lysine 167–proline 177. Residues histidine 179 to glycine 198 are compositionally biased toward pro residues.

The protein belongs to the plant proline-rich protein superfamily. ENOD12 family.

It is found in the secreted. Its subcellular location is the cell wall. In Daucus carota (Wild carrot), this protein is Proline-rich 33 kDa extensin-related protein.